The following is a 157-amino-acid chain: MSSEEALARLAAEEQQLQFTLFNPDTAWQLGCALRQEAGRRGLHVTIDIQFAGQTLFHCAMPGTSPDNAEWIRRKRNVVLRFQRSSYAMGMRLTLRNTTLEAFYGLDPADYASQGGSFPLRIVNCGCVGAISVSGAPQLDDHLLVSEVIARFLGINQ.

Belongs to the UPF0303 family.

This chain is UPF0303 protein NT01EI_1570, found in Edwardsiella ictaluri (strain 93-146).